Reading from the N-terminus, the 306-residue chain is Ornithine carbamoyltransferase 1, anabolic (306 aa).

Carbamoyl phosphate-binding positions include 53–56 (STRT), glutamine 80, arginine 104, and 131–134 (HPCQ). Residues asparagine 162, aspartate 219, and 223 to 224 (SM) contribute to the L-ornithine site. Carbamoyl phosphate is bound by residues 259 to 260 (CL) and arginine 287.

This sequence belongs to the aspartate/ornithine carbamoyltransferase superfamily. OTCase family. As to quaternary structure, homotrimer.

It is found in the cytoplasm. The enzyme catalyses carbamoyl phosphate + L-ornithine = L-citrulline + phosphate + H(+). Its pathway is amino-acid biosynthesis; L-arginine biosynthesis; L-arginine from L-ornithine and carbamoyl phosphate: step 1/3. Its activity is regulated as follows. Reversibly inhibited by inhibited by phaseolotoxin and octicidine. Its function is as follows. Reversibly catalyzes the transfer of the carbamoyl group from carbamoyl phosphate (CP) to the N(epsilon) atom of ornithine (ORN) to produce L-citrulline, which is a substrate for argininosuccinate synthetase, the enzyme involved in the final step in arginine biosynthesis. The chain is Ornithine carbamoyltransferase 1, anabolic from Pseudomonas savastanoi pv. phaseolicola (Pseudomonas syringae pv. phaseolicola).